The sequence spans 578 residues: Membrane protein insertase YidC (578 aa).

A helical transmembrane segment spans residues 3–23 (IQRSILIVALAVVSYLLVLQW). Positions 34–71 (AASASMNTTQGLPDTPSAAGTSSDVPTAQSGAAGSEAA) are disordered. The segment covering 37–65 (ASMNTTQGLPDTPSAAGTSSDVPTAQSGA) has biased composition (polar residues). The next 5 helical transmembrane spans lie at 361–381 (LELTVDYGFLWFIAQPIFWLL), 387–407 (LIGNWGWSIIALTVLIKLAFF), 457–477 (LGGCLPILVQMPVFLSLYWVL), 500–520 (PFFILPIVMGGTMLIQQMLNP), and 535–555 (PIIFTFFFLWFPAGLVLYWVV).

The protein belongs to the OXA1/ALB3/YidC family. Type 1 subfamily. Interacts with the Sec translocase complex via SecD. Specifically interacts with transmembrane segments of nascent integral membrane proteins during membrane integration.

Its subcellular location is the cell inner membrane. Its function is as follows. Required for the insertion and/or proper folding and/or complex formation of integral membrane proteins into the membrane. Involved in integration of membrane proteins that insert both dependently and independently of the Sec translocase complex, as well as at least some lipoproteins. Aids folding of multispanning membrane proteins. This chain is Membrane protein insertase YidC, found in Pseudomonas paraeruginosa (strain DSM 24068 / PA7) (Pseudomonas aeruginosa (strain PA7)).